Consider the following 163-residue polypeptide: Nucleotide-binding protein Ava_2001 (163 aa).

The protein belongs to the YajQ family.

Nucleotide-binding protein. This is Nucleotide-binding protein Ava_2001 from Trichormus variabilis (strain ATCC 29413 / PCC 7937) (Anabaena variabilis).